A 336-amino-acid polypeptide reads, in one-letter code: Cytoskeleton protein RodZ (336 aa).

The Cytoplasmic segment spans residues 1-111 (MNTEATHDKT…LGKRRKKRDG (111 aa)). Residues 19–71 (LRNAREQLGLSQQAVAERLCLKVSTVRDIEEDKAPADLASTFLRGYIRSYAKL) form the HTH cro/C1-type domain. The H-T-H motif DNA-binding region spans 30–49 (QQAVAERLCLKVSTVRDIEE). The chain crosses the membrane as a helical; Signal-anchor for type II membrane protein span at residues 112 to 132 (WLMSFTWLVLFVVIGLTGAWW). The Periplasmic portion of the chain corresponds to 133 to 336 (WQNHKAQQEE…TVSAEQSAAQ (204 aa)). The segment covering 152-164 (AALNNSGNNGAQS) has biased composition (low complexity). Residues 152 to 235 (AALNNSGNNG…TTTGNVNVTQ (84 aa)) are disordered. Composition is skewed to polar residues over residues 165–190 (VPLN…TVEP) and 200–217 (PDQT…QANV). Positions 220–235 (APAVTPTTTGNVNVTQ) are enriched in low complexity.

The protein belongs to the RodZ family.

It is found in the cell inner membrane. Functionally, cytoskeletal protein that is involved in cell-shape control through regulation of the length of the long axis. The protein is Cytoskeleton protein RodZ of Enterobacter sp. (strain 638).